Consider the following 253-residue polypeptide: Ipsdienol dehydrogenase (253 aa).

Residues 12-40 (VTGG…FSRN) and Asp63 each bind NAD(+). Ser149 contacts substrate. The active-site Proton acceptor is the Tyr162. Residue Lys166 coordinates NAD(+).

It belongs to the short-chain dehydrogenases/reductases (SDR) family. As to expression, specifically expressed in male midguts. Expressed at higher level in the anterior midgut of fed males.

The protein localises to the cytoplasm. Its subcellular location is the cytosol. It catalyses the reaction (4R)-ipsdienol + NADP(+) = ipsdienone + NADPH + H(+). The enzyme catalyses (4R)-ipsdienol + NAD(+) = ipsdienone + NADH + H(+). Its function is as follows. Catalyzes the oxidation of racemic ipsdienol and (4R)-(-)-ipsdienol to form ipsdienone (2-methyl-6-methylene-2,7-octadien-4-one), an intermediate in the biosynthesis of pheromonal ipsdienol in male pine engraver beetles. In contrast, (4S)-(+)-ipsdienol is not a substrate. In Ips pini (Pine engraver beetle), this protein is Ipsdienol dehydrogenase.